The primary structure comprises 99 residues: Bombyxin A-1 homolog (99 aa).

The first 19 residues, 1–19 (MKTQVLFLVFALAAVMVSG), serve as a signal peptide directing secretion. Cystine bridges form between Cys27–Cys86, Cys39–Cys99, and Cys85–Cys90. Residues 48–76 (TPYISPENEGYGWRWLEPQRARQLDGARG) constitute a propeptide, c peptide like.

It belongs to the insulin family. As to quaternary structure, heterodimer of a B chain and an A chain linked by two disulfide bonds.

The protein resides in the secreted. Its function is as follows. Brain peptide responsible for activation of prothoracic glands to produce ecdysone in insects. The chain is Bombyxin A-1 homolog (SBXA1) from Samia cynthia (Ailanthus silkmoth).